The chain runs to 119 residues: Chymotrypsin inhibitor WCI (119 aa).

5 disulfide bridges follow: Cys6–Cys55, Cys20–Cys44, Cys29–Cys87, Cys45–Cys105, and Cys57–Cys116.

Its subcellular location is the secreted. Its function is as follows. Inhibits bovine, insect and wheat chymotrypsins. Inhibits bovine chymotrypsin with Ki of 0.6 nM. Does not inhibit human or wheat alpha-amylases, bovine pancreatic trypsin, or trypsin-like activity isolated from wheat. This chain is Chymotrypsin inhibitor WCI, found in Triticum aestivum (Wheat).